The primary structure comprises 627 residues: 1-deoxy-D-xylulose-5-phosphate synthase (627 aa).

Thiamine diphosphate contacts are provided by residues H87 and 128 to 130; that span reads GHS. D159 contributes to the Mg(2+) binding site. Thiamine diphosphate contacts are provided by residues 160–161, N188, F295, and E375; that span reads GA. Residue N188 participates in Mg(2+) binding.

Belongs to the transketolase family. DXPS subfamily. Homodimer. Requires Mg(2+) as cofactor. It depends on thiamine diphosphate as a cofactor.

The enzyme catalyses D-glyceraldehyde 3-phosphate + pyruvate + H(+) = 1-deoxy-D-xylulose 5-phosphate + CO2. Its pathway is metabolic intermediate biosynthesis; 1-deoxy-D-xylulose 5-phosphate biosynthesis; 1-deoxy-D-xylulose 5-phosphate from D-glyceraldehyde 3-phosphate and pyruvate: step 1/1. In terms of biological role, catalyzes the acyloin condensation reaction between C atoms 2 and 3 of pyruvate and glyceraldehyde 3-phosphate to yield 1-deoxy-D-xylulose-5-phosphate (DXP). This is 1-deoxy-D-xylulose-5-phosphate synthase from Pseudomonas aeruginosa (strain LESB58).